The following is a 376-amino-acid chain: N-acetyldiaminopimelate deacetylase (376 aa).

The active site involves Asp69. Catalysis depends on Glu128, which acts as the Proton acceptor.

This sequence belongs to the peptidase M20A family. N-acetyldiaminopimelate deacetylase subfamily.

It carries out the reaction N-acetyl-(2S,6S)-2,6-diaminopimelate + H2O = (2S,6S)-2,6-diaminopimelate + acetate. It participates in amino-acid biosynthesis; L-lysine biosynthesis via DAP pathway; LL-2,6-diaminopimelate from (S)-tetrahydrodipicolinate (acetylase route): step 3/3. Functionally, catalyzes the conversion of N-acetyl-diaminopimelate to diaminopimelate and acetate. This is N-acetyldiaminopimelate deacetylase from Bacillus cereus (strain AH820).